The sequence spans 663 residues: Nuclear receptor-binding protein homolog (663 aa).

Residues 1–14 (MSNSQANAGSSGSA) are compositionally biased toward low complexity. The segment at 1–112 (MSNSQANAGS…SEDESEILEE (112 aa)) is disordered. Residues 19–46 (LNPSGSATLVPNLTTTNASSQATPASTI) show a composition bias toward polar residues. Low complexity-rich tracts occupy residues 47–57 (PQQQQPQQSQP) and 81–94 (VVVA…NLDS). Acidic residues predominate over residues 101–111 (DDSEDESEILE). The 271-residue stretch at 122–392 (REEVDQRDVP…ANDLLFHPLL (271 aa)) folds into the Protein kinase domain. Disordered regions lie at residues 481-505 (PNFR…EPVD) and 638-663 (YVPQ…TTSN). S489, S495, and S498 each carry phosphoserine. T500 carries the phosphothreonine modification. Positions 641–652 (QDQQQYQQQQQE) are enriched in low complexity.

This sequence belongs to the protein kinase superfamily. Ser/Thr protein kinase family.

It localises to the cytoplasm. Its subcellular location is the cell cortex. Its function is as follows. May play a role in subcellular trafficking between the endoplasmic reticulum and Golgi apparatus. In Drosophila pseudoobscura pseudoobscura (Fruit fly), this protein is Nuclear receptor-binding protein homolog.